The chain runs to 845 residues: Cadherin-related family member 5 (845 aa).

The N-terminal stretch at M1–A25 is a signal peptide. The Extracellular portion of the chain corresponds to Q26 to A669. Residues N44, N81, N140, N198, N297, N308, and N405 are each glycosylated (N-linked (GlcNAc...) asparagine). 4 Cadherin domains span residues F71–F124, P125–F237, I249–F354, and P355–T459. Residues S452 to K661 form a disordered region. Residues S506–P518 are compositionally biased toward low complexity. N-linked (GlcNAc...) asparagine glycosylation occurs at N526. 3 stretches are compositionally biased toward polar residues: residues T539 to Q549, G556 to P594, and A602 to Q611. A run of 3 repeats spans residues A540–T570, A571–T601, and A602–G631. The segment at A540–P645 is 4 X 31 AA approximate tandem repeats. Residues T632–P645 form a 4; truncated repeat. Residues A633–S652 are compositionally biased toward low complexity. The helical transmembrane segment at A670 to V690 threads the bilayer. The Cytoplasmic portion of the chain corresponds to H691–I845. The interval H691–I845 is mediates interaction with USH1C and MYO7B and is required for proper localization to microvilli tips and function in microvilli organization. The tract at residues A724–K789 is disordered. Pro residues predominate over residues V729 to P762. S770 carries the post-translational modification Phosphoserine. T810 is modified (phosphothreonine). The tract at residues L811 to I845 is disordered. 3 positions are modified to phosphoserine: S817, S819, and S821. Positions Y835 to I845 are enriched in low complexity.

In terms of assembly, part of the IMAC/intermicrovillar adhesion complex/intermicrovillar tip-link complex composed of ANKS4B, MYO7B, USH1C, CDHR2 and CDHR5. Interacts (via cytoplasmic domain) with USH1C and MYO7B; required for proper localization of CDHR5 to microvilli tips and its function in brush border differentiation. Post-translationally, N- and O-glycosylated. Highest expression in kidney, liver, colon and small intestine. In kidney, expressed apically along brush border of proximal convoluted tubule but not in cortical collecting ducts. Isoform 1 is expressed primarily in adult small intestine and colon. Isoform 2 is highly expressed in fetal liver. Expressed in duodenum with higher expression in enterocytes along the villus axis and lower expression in crypts (at protein level).

It localises to the apical cell membrane. The protein resides in the cell projection. The protein localises to the microvillus membrane. In terms of biological role, intermicrovillar adhesion molecule that forms, via its extracellular domain, calcium-dependent heterophilic complexes with CDHR2 on adjacent microvilli. Thereby, controls the packing of microvilli at the apical membrane of epithelial cells. Through its cytoplasmic domain, interacts with microvillus cytoplasmic proteins to form the intermicrovillar adhesion complex/IMAC. This complex plays a central role in microvilli and epithelial brush border differentiation. The sequence is that of Cadherin-related family member 5 from Homo sapiens (Human).